A 331-amino-acid polypeptide reads, in one-letter code: DNA-directed RNA polymerase subunit alpha (331 aa).

Residues 1–235 form an alpha N-terminal domain (alpha-NTD) region; that stretch reads MTMHIRWRGM…KHLNPFVQYR (235 aa). Positions 255–331 are alpha C-terminal domain (alpha-CTD); that stretch reads QLEAKLNMTL…GMRVPNQPLF (77 aa).

It belongs to the RNA polymerase alpha chain family. As to quaternary structure, homodimer. The RNAP catalytic core consists of 2 alpha, 1 beta, 1 beta' and 1 omega subunit. When a sigma factor is associated with the core the holoenzyme is formed, which can initiate transcription.

It carries out the reaction RNA(n) + a ribonucleoside 5'-triphosphate = RNA(n+1) + diphosphate. Functionally, DNA-dependent RNA polymerase catalyzes the transcription of DNA into RNA using the four ribonucleoside triphosphates as substrates. This chain is DNA-directed RNA polymerase subunit alpha, found in Rhodopirellula baltica (strain DSM 10527 / NCIMB 13988 / SH1).